The following is a 255-amino-acid chain: Lactose phosphotransferase system repressor (255 aa).

One can recognise an HTH deoR-type domain in the interval 3-58 (KKRRLEKILDMLKIDGTITIKEIIDELDISDMTARRDLDALEADGLLTRTHGGAQL). The H-T-H motif DNA-binding region spans 20 to 39 (ITIKEIIDELDISDMTARRD).

Its function is as follows. Repressor of the lactose catabolism operon. Galactose-6-phosphate is the inducer. The chain is Lactose phosphotransferase system repressor (lacR) from Lactococcus lactis subsp. lactis (Streptococcus lactis).